We begin with the raw amino-acid sequence, 330 residues long: DNA-directed RNA polymerase subunit alpha (330 aa).

Residues 1-231 (MQTNLLKPKT…EQLAVFAQLE (231 aa)) form an alpha N-terminal domain (alpha-NTD) region. Positions 250–330 (FDPILLRPVD…SWPPAGLDKR (81 aa)) are alpha C-terminal domain (alpha-CTD).

The protein belongs to the RNA polymerase alpha chain family. Homodimer. The RNAP catalytic core consists of 2 alpha, 1 beta, 1 beta' and 1 omega subunit. When a sigma factor is associated with the core the holoenzyme is formed, which can initiate transcription.

It carries out the reaction RNA(n) + a ribonucleoside 5'-triphosphate = RNA(n+1) + diphosphate. Functionally, DNA-dependent RNA polymerase catalyzes the transcription of DNA into RNA using the four ribonucleoside triphosphates as substrates. The polypeptide is DNA-directed RNA polymerase subunit alpha (Polaromonas naphthalenivorans (strain CJ2)).